Reading from the N-terminus, the 757-residue chain is Dolichyl-diphosphooligosaccharide--protein glycosyltransferase subunit stt-3 (757 aa).

The Cytoplasmic portion of the chain corresponds to 1–13 (MTSTTAARTASSR). Residues 14–34 (VGATTLLTIVVLALAWFVGFA) traverse the membrane as a helical segment. The Lumenal portion of the chain corresponds to 35–121 (SRLFAIVRFE…VHIREVCVFL (87 aa)). A DXD motif 1 motif is present at residues 49-51 (EFD). Residue aspartate 51 coordinates Mn(2+). Residues 122–140 (APTFSGLTAIATYLLTKEL) form a helical membrane-spanning segment. Over 141–142 (WS) the chain is Cytoplasmic. The helical transmembrane segment at 143–160 (PGAGLFAACFIAISPGYT) threads the bilayer. The Lumenal segment spans residues 161–171 (SRSVAGSYDNE). Residues aspartate 169 and glutamate 171 each coordinate Mn(2+). A DXD motif 2 motif is present at residues 169–171 (DNE). The chain crosses the membrane as a helical span at residues 172 to 191 (GIAIFALQFTYYLWVKSLKT). Residues 192–193 (GS) lie on the Cytoplasmic side of the membrane. The helical transmembrane segment at 194–208 (IMWASLCALSYFYMV) threads the bilayer. Residues 209–210 (SA) lie on the Lumenal side of the membrane. 2 helical membrane passes run 211–235 (WGGY…GRYS) and 236–261 (SRLF…FVGF). At 262 to 269 (QPVRTSEH) the chain is on the lumenal side. The helical transmembrane segment at 270–289 (MPAFGVFGLLQIVALMHYAR) threads the bilayer. The Cytoplasmic portion of the chain corresponds to 290–299 (NRITRQQFMT). The helical transmembrane segment at 300–320 (LFVGGLTILGALSVVVYFALV) threads the bilayer. The Lumenal portion of the chain corresponds to 321–358 (WGGYVAPFSGRFYSLWDTGYAKIHIPIIASVSEHQPTT). An SVSE motif motif is present at residues 350–353 (SVSE). The chain crosses the membrane as a helical span at residues 359–381 (WVSFFFDLHITAAVFPVGLWYCI). Over 382–387 (KKVNDE) the chain is Cytoplasmic. The helical transmembrane segment at 388–404 (RVFIILYAVSAVYFAGV) threads the bilayer. Over 405–408 (MVRL) the chain is Lumenal. Arginine 407 is a dolichyl diphosphooligosaccharide binding site. Residues 409 to 430 (MLTLTPAVCVLAGIGFSYTFEK) form a helical membrane-spanning segment. The Cytoplasmic portion of the chain corresponds to 431–469 (YLKDEETKERSSSQSGTTKDEKLYDKAAKNVKSRNANDG). Residues 470-495 (DESGVSSNVRTIISIILVIFLLMFVV) traverse the membrane as a helical segment. Residues 496 to 757 (HATYVTSNAY…IRPAPTASKA (262 aa)) lie on the Lumenal side of the membrane. Residues 547 to 549 (WWD) are interacts with target acceptor peptide in protein substrate. Residues 547-551 (WWDYG) carry the WWDYG motif motif. Tyrosine 552 serves as a coordination point for dolichyl diphosphooligosaccharide. Residues asparagine 559 and asparagine 566 are each glycosylated (N-linked (GlcNAc...) asparagine). Asparagine 570 carries an N-linked (GlcNAc...) (high mannose) asparagine glycan. An N-linked (GlcNAc...) asparagine glycan is attached at asparagine 584. The DK motif signature appears at 614-621 (DINKFLWM). The segment at 721–757 (RPTVKSEEATIPIKGKKATQGKNKKGVIRPAPTASKA) is disordered. A compositionally biased stretch (basic residues) spans 734–747 (KGKKATQGKNKKGV).

Belongs to the STT3 family. In terms of assembly, component of the oligosaccharyltransferase (OST) complex. Requires Mg(2+) as cofactor. The cofactor is Mn(2+).

It is found in the endoplasmic reticulum membrane. The enzyme catalyses a di-trans,poly-cis-dolichyl diphosphooligosaccharide + L-asparaginyl-[protein] = N(4)-(oligosaccharide-(1-&gt;4)-N-acetyl-beta-D-glucosaminyl-(1-&gt;4)-N-acetyl-beta-D-glucosaminyl)-L-asparaginyl-[protein] + a di-trans,poly-cis-dolichyl diphosphate + H(+). It functions in the pathway protein modification; protein glycosylation. Its function is as follows. Catalytic subunit of the oligosaccharyl transferase (OST) complex that catalyzes the initial transfer of a defined glycan (Glc(3)Man(9)GlcNAc(2) in eukaryotes) from the lipid carrier dolichol-pyrophosphate to an asparagine residue within an Asn-X-Ser/Thr consensus motif in nascent polypeptide chains, the first step in protein N-glycosylation. N-glycosylation occurs cotranslationally and the complex associates with the Sec61 complex at the channel-forming translocon complex that mediates protein translocation across the endoplasmic reticulum (ER). All subunits are required for a maximal enzyme activity. This subunit contains the active site and the acceptor peptide and donor lipid-linked oligosaccharide (LLO) binding pockets. This is Dolichyl-diphosphooligosaccharide--protein glycosyltransferase subunit stt-3 from Caenorhabditis elegans.